We begin with the raw amino-acid sequence, 288 residues long: Small ribosomal subunit protein uS3 (288 aa).

In terms of domain architecture, KH type-2 spans 39–107; sequence VREYLKAKLK…PVAVNIEEVR (69 aa). The tract at residues 209–288 is disordered; the sequence is GRNDLPAAET…AAAAADGKGE (80 aa). Positions 219–238 are enriched in basic and acidic residues; the sequence is PRPEEERRPRGPRRDGRPGD. A compositionally biased stretch (low complexity) spans 277-288; the sequence is APAAAAADGKGE.

Belongs to the universal ribosomal protein uS3 family. Part of the 30S ribosomal subunit. Forms a tight complex with proteins S10 and S14.

Binds the lower part of the 30S subunit head. Binds mRNA in the 70S ribosome, positioning it for translation. This is Small ribosomal subunit protein uS3 from Acidovorax sp. (strain JS42).